Here is a 156-residue protein sequence, read N- to C-terminus: Cytochrome c-type biogenesis protein CcmE (156 aa).

At 1–8 the chain is on the cytoplasmic side; the sequence is MNPLRRKR. The chain crosses the membrane as a helical; Signal-anchor for type II membrane protein span at residues 9–29; that stretch reads LLIILAILAGVGIAVGLAMSA. The Periplasmic portion of the chain corresponds to 30–156; the sequence is LRENINLFYT…RIRSLPRRAK (127 aa). 2 residues coordinate heme: His124 and Tyr128.

It belongs to the CcmE/CycJ family.

It is found in the cell inner membrane. Its function is as follows. Heme chaperone required for the biogenesis of c-type cytochromes. Transiently binds heme delivered by CcmC and transfers the heme to apo-cytochromes in a process facilitated by CcmF and CcmH. The chain is Cytochrome c-type biogenesis protein CcmE from Pseudomonas fluorescens.